The chain runs to 99 residues: UPF0235 protein HS_1657 (99 aa).

It belongs to the UPF0235 family.

The protein is UPF0235 protein HS_1657 of Histophilus somni (strain 129Pt) (Haemophilus somnus).